The sequence spans 459 residues: Adenylosuccinate synthetase isozyme 1 C (459 aa).

Residues 1–31 (MSFSWSAKDHKSYTNPPSNPTQGLKRPRNDT) form a disordered region. Residues 13–22 (YTNPPSNPTQ) show a composition bias toward polar residues. Residues 44-50 (GDEGKGK) and 72-74 (GHT) each bind GTP. Asp-45 acts as the Proton acceptor in catalysis. Residues Asp-45 and Gly-72 each contribute to the Mg(2+) site. Asp-45 contributes to the substrate binding site. IMP contacts are provided by residues 45-48 (DEGK), 70-73 (NAGH), Thr-165, Arg-179, Asn-258, Thr-273, and Arg-337. The active-site Proton donor is the His-73. A substrate-binding site is contributed by 333–339 (VTTGRKR). GTP contacts are provided by residues Arg-339, 365–367 (KLD), and 447–450 (GVGK).

Belongs to the adenylosuccinate synthetase family. As to quaternary structure, homodimer. The cofactor is Mg(2+).

It localises to the cytoplasm. It catalyses the reaction IMP + L-aspartate + GTP = N(6)-(1,2-dicarboxyethyl)-AMP + GDP + phosphate + 2 H(+). The protein operates within purine metabolism; AMP biosynthesis via de novo pathway; AMP from IMP: step 1/2. Its function is as follows. Component of the purine nucleotide cycle (PNC), which interconverts IMP and AMP to regulate the nucleotide levels in various tissues, and which contributes to glycolysis and ammoniagenesis. Catalyzes the first committed step in the biosynthesis of AMP from IMP. This Salmo salar (Atlantic salmon) protein is Adenylosuccinate synthetase isozyme 1 C (adss1c).